We begin with the raw amino-acid sequence, 434 residues long: Enolase (434 aa).

Residue Gln-163 participates in (2R)-2-phosphoglycerate binding. Glu-205 serves as the catalytic Proton donor. Mg(2+) is bound by residues Asp-242, Glu-289, and Asp-316. Lys-341, Arg-370, Ser-371, and Lys-392 together coordinate (2R)-2-phosphoglycerate. Residue Lys-341 is the Proton acceptor of the active site.

It belongs to the enolase family. It depends on Mg(2+) as a cofactor.

The protein resides in the cytoplasm. It is found in the secreted. It localises to the cell surface. It carries out the reaction (2R)-2-phosphoglycerate = phosphoenolpyruvate + H2O. It functions in the pathway carbohydrate degradation; glycolysis; pyruvate from D-glyceraldehyde 3-phosphate: step 4/5. Catalyzes the reversible conversion of 2-phosphoglycerate (2-PG) into phosphoenolpyruvate (PEP). It is essential for the degradation of carbohydrates via glycolysis. The chain is Enolase from Lacticaseibacillus casei (strain BL23) (Lactobacillus casei).